The sequence spans 312 residues: Porphobilinogen deaminase (312 aa).

At C243 the chain carries S-(dipyrrolylmethanemethyl)cysteine.

This sequence belongs to the HMBS family. Monomer. Dipyrromethane serves as cofactor.

It catalyses the reaction 4 porphobilinogen + H2O = hydroxymethylbilane + 4 NH4(+). It participates in porphyrin-containing compound metabolism; protoporphyrin-IX biosynthesis; coproporphyrinogen-III from 5-aminolevulinate: step 2/4. In terms of biological role, tetrapolymerization of the monopyrrole PBG into the hydroxymethylbilane pre-uroporphyrinogen in several discrete steps. The chain is Porphobilinogen deaminase from Vibrio campbellii (strain ATCC BAA-1116).